The following is a 131-amino-acid chain: Histone H2A-beta (131 aa).

Serine 2 is modified (N-acetylserine). N6-acetyllysine occurs at positions 5 and 9. Glutamine 106 carries the N5-methylglutamine modification. Residue serine 128 is modified to Phosphoserine. Residues 128-129 carry the [ST]-Q motif motif; the sequence is SQ.

This sequence belongs to the histone H2A family. The nucleosome is a histone octamer containing two molecules each of H2A, H2B, H3 and H4 assembled in one H3-H4 heterotetramer and two H2A-H2B heterodimers. The octamer wraps approximately 147 bp of DNA. Post-translationally, phosphorylated to form H2AS128ph (gamma-H2A) in response to DNA double-strand breaks (DSBs) generated by exogenous genotoxic agents and by stalled replication forks. Phosphorylation is dependent on the DNA damage checkpoint kinases rad3/ATR and tel1/ATM, spreads on either side of a detected DSB site and may mark the surrounding chromatin for recruitment of proteins required for DNA damage signaling and repair. Gamma-H2A is required for recruiting crb2, a modulator of DNA damage checkpoint signaling, to DSB sites. Gamma-H2A is removed from the DNA prior to the strand invasion-primer extension step of the repair process and subsequently dephosphorylated. Dephosphorylation is necessary for efficient recovery from the DNA damage checkpoint. Acetylated by esa1 to form H2AK4ac and H2AK7ac.

It is found in the nucleus. The protein resides in the chromosome. Functionally, core component of nucleosome which plays a central role in DNA double strand break (DSB) repair. Nucleosomes wrap and compact DNA into chromatin, limiting DNA accessibility to the cellular machineries which require DNA as a template. Histones thereby play a central role in transcription regulation, DNA repair, DNA replication and chromosomal stability. DNA accessibility is regulated via a complex set of post-translational modifications of histones, also called histone code, and nucleosome remodeling. The protein is Histone H2A-beta (hta2) of Schizosaccharomyces pombe (strain 972 / ATCC 24843) (Fission yeast).